The sequence spans 114 residues: Large ribosomal subunit protein uL22 (114 aa).

Belongs to the universal ribosomal protein uL22 family. Part of the 50S ribosomal subunit.

Its function is as follows. This protein binds specifically to 23S rRNA; its binding is stimulated by other ribosomal proteins, e.g. L4, L17, and L20. It is important during the early stages of 50S assembly. It makes multiple contacts with different domains of the 23S rRNA in the assembled 50S subunit and ribosome. In terms of biological role, the globular domain of the protein is located near the polypeptide exit tunnel on the outside of the subunit, while an extended beta-hairpin is found that lines the wall of the exit tunnel in the center of the 70S ribosome. The chain is Large ribosomal subunit protein uL22 from Methylacidiphilum infernorum (isolate V4) (Methylokorus infernorum (strain V4)).